A 457-amino-acid chain; its full sequence is Bifunctional protein GlmU (457 aa).

The interval 1 to 230 is pyrophosphorylase; the sequence is MSKRYAVVLA…FEESLGVNDR (230 aa). UDP-N-acetyl-alpha-D-glucosamine contacts are provided by residues 9–12, Lys23, Gln73, and 78–79; these read LAAG and GT. Asp103 contacts Mg(2+). Residues Gly140, Glu155, Asn170, and Asn228 each contribute to the UDP-N-acetyl-alpha-D-glucosamine site. A Mg(2+)-binding site is contributed by Asn228. The tract at residues 231–251 is linker; the sequence is IALAEASKLMQRRINENHMRN. The segment at 252-457 is N-acetyltransferase; the sequence is GVTLVNPEST…GYAKHLNHGK (206 aa). UDP-N-acetyl-alpha-D-glucosamine-binding residues include Arg333 and Lys351. His363 serves as the catalytic Proton acceptor. UDP-N-acetyl-alpha-D-glucosamine is bound by residues Tyr366 and Asn377. Acetyl-CoA is bound by residues 386–387, Ala423, and Arg440; that span reads NY.

This sequence in the N-terminal section; belongs to the N-acetylglucosamine-1-phosphate uridyltransferase family. In the C-terminal section; belongs to the transferase hexapeptide repeat family. Homotrimer. The cofactor is Mg(2+).

It is found in the cytoplasm. The enzyme catalyses alpha-D-glucosamine 1-phosphate + acetyl-CoA = N-acetyl-alpha-D-glucosamine 1-phosphate + CoA + H(+). It carries out the reaction N-acetyl-alpha-D-glucosamine 1-phosphate + UTP + H(+) = UDP-N-acetyl-alpha-D-glucosamine + diphosphate. The protein operates within nucleotide-sugar biosynthesis; UDP-N-acetyl-alpha-D-glucosamine biosynthesis; N-acetyl-alpha-D-glucosamine 1-phosphate from alpha-D-glucosamine 6-phosphate (route II): step 2/2. It participates in nucleotide-sugar biosynthesis; UDP-N-acetyl-alpha-D-glucosamine biosynthesis; UDP-N-acetyl-alpha-D-glucosamine from N-acetyl-alpha-D-glucosamine 1-phosphate: step 1/1. Its pathway is bacterial outer membrane biogenesis; LPS lipid A biosynthesis. In terms of biological role, catalyzes the last two sequential reactions in the de novo biosynthetic pathway for UDP-N-acetylglucosamine (UDP-GlcNAc). The C-terminal domain catalyzes the transfer of acetyl group from acetyl coenzyme A to glucosamine-1-phosphate (GlcN-1-P) to produce N-acetylglucosamine-1-phosphate (GlcNAc-1-P), which is converted into UDP-GlcNAc by the transfer of uridine 5-monophosphate (from uridine 5-triphosphate), a reaction catalyzed by the N-terminal domain. The polypeptide is Bifunctional protein GlmU (Listeria monocytogenes serotype 4a (strain HCC23)).